The primary structure comprises 129 residues: Small ribosomal subunit protein uS8 (129 aa).

The protein belongs to the universal ribosomal protein uS8 family. In terms of assembly, part of the 30S ribosomal subunit.

In terms of biological role, one of the primary rRNA binding proteins, it binds directly to 16S rRNA central domain where it helps coordinate assembly of the platform of the 30S subunit. The protein is Small ribosomal subunit protein uS8 of Nanoarchaeum equitans (strain Kin4-M).